Here is a 205-residue protein sequence, read N- to C-terminus: uncharacterized protein (205 aa).

Residues 1–18 (MKASLALLSLLTAFTSHS) form the signal peptide.

This is an uncharacterized protein from Escherichia coli (strain K12).